We begin with the raw amino-acid sequence, 474 residues long: UDP-N-acetylmuramate--L-alanine ligase (474 aa).

112 to 118 (GTHGKTT) lines the ATP pocket.

Belongs to the MurCDEF family.

It localises to the cytoplasm. The enzyme catalyses UDP-N-acetyl-alpha-D-muramate + L-alanine + ATP = UDP-N-acetyl-alpha-D-muramoyl-L-alanine + ADP + phosphate + H(+). The protein operates within cell wall biogenesis; peptidoglycan biosynthesis. Cell wall formation. The polypeptide is UDP-N-acetylmuramate--L-alanine ligase (Cupriavidus taiwanensis (strain DSM 17343 / BCRC 17206 / CCUG 44338 / CIP 107171 / LMG 19424 / R1) (Ralstonia taiwanensis (strain LMG 19424))).